Reading from the N-terminus, the 301-residue chain is tRNA dimethylallyltransferase (301 aa).

9-16 (GPTASGKS) contributes to the ATP binding site. 11-16 (TASGKS) provides a ligand contact to substrate. The interval 34 to 37 (DSMQ) is interaction with substrate tRNA.

The protein belongs to the IPP transferase family. Monomer. Mg(2+) is required as a cofactor.

It catalyses the reaction adenosine(37) in tRNA + dimethylallyl diphosphate = N(6)-dimethylallyladenosine(37) in tRNA + diphosphate. Functionally, catalyzes the transfer of a dimethylallyl group onto the adenine at position 37 in tRNAs that read codons beginning with uridine, leading to the formation of N6-(dimethylallyl)adenosine (i(6)A). In Corynebacterium glutamicum (strain R), this protein is tRNA dimethylallyltransferase.